Consider the following 124-residue polypeptide: Fluoride-specific ion channel FluC 1 (124 aa).

A run of 4 helical transmembrane segments spans residues 1 to 21 (MCAV…ALGA), 30 to 50 (LWPG…LLGY), 64 to 84 (FLGV…VDAV), and 93 to 113 (LYVV…MLAG). Na(+) contacts are provided by Gly-71 and Thr-74.

The protein belongs to the fluoride channel Fluc/FEX (TC 1.A.43) family.

The protein localises to the cell membrane. It carries out the reaction fluoride(in) = fluoride(out). Its activity is regulated as follows. Na(+) is not transported, but it plays an essential structural role and its presence is essential for fluoride channel function. Its function is as follows. Fluoride-specific ion channel. Important for reducing fluoride concentration in the cell, thus reducing its toxicity. This chain is Fluoride-specific ion channel FluC 1, found in Rhodococcus jostii (strain RHA1).